Reading from the N-terminus, the 270-residue chain is tRNA pseudouridine synthase A (270 aa).

Residue Asp60 is the Nucleophile of the active site. Tyr118 contributes to the substrate binding site.

It belongs to the tRNA pseudouridine synthase TruA family. As to quaternary structure, homodimer.

It catalyses the reaction uridine(38/39/40) in tRNA = pseudouridine(38/39/40) in tRNA. In terms of biological role, formation of pseudouridine at positions 38, 39 and 40 in the anticodon stem and loop of transfer RNAs. This chain is tRNA pseudouridine synthase A, found in Cronobacter sakazakii (strain ATCC BAA-894) (Enterobacter sakazakii).